Here is a 284-residue protein sequence, read N- to C-terminus: Circadian clock oscillator protein KaiA (284 aa).

A psR domain, binds oxidized quinones region spans residues 1-135; the sequence is MLSQIAICIW…LRLAPVETMA (135 aa). A KaiA N-terminal domain is found at 1-164; the sequence is MLSQIAICIW…DLAQRLQERL (164 aa). The interval 165–173 is flexible linker; it reads GYLGVYYKR. The KaiA C-terminal domain maps to 174–282; that stretch reads DPDRFLRNLP…CEMYRRSIPR (109 aa).

It belongs to the KaiA family. As to quaternary structure, homodimer. The KaiABC complex composition changes during the circadian cycle to control KaiC phosphorylation. Complexes KaiC(6), KaiA(2-4):KaiC(6), KaiB(6):KaiC(6) and KaiC(6):KaiB(6):KaiA(12) are among the most important forms, many form cooperatively. The KaiA:KaiB complex is only found at 20-24 hours in the circadian cycle (subjective night). Binds to the C-terminal A-loop of KaiC via a coiled-coil structure. KaiA and CikA compete for binding to KaiB(fs). CikA copurifies with this protein in the clock complex. Interacts with LdpA.

Binding of oxidized quinones (produced as darkness falls) prevents KaiA from stimulating KaiC autophosphorylation. Functionally, key component of the KaiABC oscillator complex, which constitutes the main circadian regulator in cyanobacteria. Complex composition changes during the circadian cycle to control KaiC phosphorylation. KaiA stimulates KaiC autophosphorylation, while KaiB sequesters KaiA, leading to KaiC autodephosphorylation. KaiA binding to the KaiC CII domain during the subjective day yields KaiA(2-4):KaiC(6) complexes which stimulate KaiC autophosphorylation. A KaiA dimer is sufficient to enhance KaiC hexamer phosphorylation. Phospho-Ser-431 KaiC accumulation triggers binding of KaiB during the subjective night to form the KaiB(6):KaiC(6) complex, leading to changes in the output regulators CikA and SasA. KaiB(6):KaiC(6) formation exposes a site for KaiA binding on KaiB that sequesters KaiA from KaiC's CII domain, making the KaiC(6):KaiB(6):KaiA(12) complex resulting in KaiC autodephosphorylation. Complete dephosphorylation of KaiC leads to dissociation of KaiA(2):KaiB(1), completing 1 cycle of the Kai oscillator. Its function is as follows. Circadian oscillations can be generated in vitro by incubating KaiA, KaiB and KaiC with 1 mM ATP. The cycle is self-sustainable for at least 3 cycles and resistant to temperature changes. A very robust clock is reconstituted with KaiA, KaiB, KaiC, SasA, CikA and RpaA; output is measured by transcription from an appropriate reporter. In terms of biological role, kaiA binds oxidized quinones via its N-terminal PsR domain and is able to sense redox signals directly; quinone analog DBMIB (2,5-dibromo-3-methyl-6-isopropyl-p-benzoquinone) blocks KaiA stimulation of KaiC phosphorylation. The homodimer binds up to 8 quinones in the crystal structure, 3 in the PsR domain and 1 via the C-terminal helical bundle. Binding of oxidized quinone to the KaiA C-terminal domain reduces the phosphorylation of KaiC slightly; quinones may interact in a complex manner with KaiA to mediate clock input. This chain is Circadian clock oscillator protein KaiA, found in Synechococcus elongatus (strain ATCC 33912 / PCC 7942 / FACHB-805) (Anacystis nidulans R2).